Consider the following 207-residue polypeptide: Non-structural protein 5 (207 aa).

The region spanning 2 to 69 is the DRBM domain; the sequence is DPVSVVHSFA…CVLISNDLKE (68 aa).

The polypeptide is Non-structural protein 5 (Segment-12) (Banna virus (BAV)).